Consider the following 330-residue polypeptide: GTP 3',8-cyclase (330 aa).

The Radical SAM core domain maps to 14–225; it reads RFGRTVDYVR…RERLADAYPE (212 aa). Arginine 23 provides a ligand contact to GTP. [4Fe-4S] cluster is bound by residues cysteine 30 and cysteine 34. Tyrosine 36 provides a ligand contact to S-adenosyl-L-methionine. Residue cysteine 37 coordinates [4Fe-4S] cluster. Arginine 70 contributes to the GTP binding site. Glycine 74 contacts S-adenosyl-L-methionine. Threonine 101 serves as a coordination point for GTP. Serine 125 contributes to the S-adenosyl-L-methionine binding site. Lysine 162 serves as a coordination point for GTP. Residues cysteine 259 and cysteine 262 each contribute to the [4Fe-4S] cluster site. A GTP-binding site is contributed by 264–266; that stretch reads KLR. Cysteine 276 is a [4Fe-4S] cluster binding site. The segment covering 309–318 has biased composition (basic and acidic residues); that stretch reads KPKDGLKSSH. The disordered stretch occupies residues 309–330; the sequence is KPKDGLKSSHDTAASSMSQIGG. Positions 319–330 are enriched in polar residues; that stretch reads DTAASSMSQIGG.

It belongs to the radical SAM superfamily. MoaA family. As to quaternary structure, monomer and homodimer. [4Fe-4S] cluster is required as a cofactor.

It catalyses the reaction GTP + AH2 + S-adenosyl-L-methionine = (8S)-3',8-cyclo-7,8-dihydroguanosine 5'-triphosphate + 5'-deoxyadenosine + L-methionine + A + H(+). It functions in the pathway cofactor biosynthesis; molybdopterin biosynthesis. In terms of biological role, catalyzes the cyclization of GTP to (8S)-3',8-cyclo-7,8-dihydroguanosine 5'-triphosphate. This is GTP 3',8-cyclase from Chlorobaculum tepidum (strain ATCC 49652 / DSM 12025 / NBRC 103806 / TLS) (Chlorobium tepidum).